Reading from the N-terminus, the 445-residue chain is 3-dehydroquinate synthase, chloroplastic (445 aa).

The N-terminal 68 residues, 1 to 68 (MAAFSLSAKQ…RASASSTAPV (68 aa)), are a transit peptide targeting the chloroplast. Residues Asn-122, 153 to 155 (DGE), Lys-158, 186 to 191 (GGVIGD), 211 to 212 (TT), Lys-224, Lys-233, and 251 to 254 (TLNT) each bind NAD(+). Glu-266 provides a ligand contact to a divalent metal cation. Residue Lys-308 participates in NAD(+) binding. Positions 329 and 346 each coordinate a divalent metal cation.

The protein belongs to the sugar phosphate cyclases superfamily. Dehydroquinate synthase family. Homodimer. A divalent metal cation is required as a cofactor. Requires NAD(+) as cofactor.

The protein localises to the plastid. It localises to the chloroplast. It carries out the reaction 7-phospho-2-dehydro-3-deoxy-D-arabino-heptonate = 3-dehydroquinate + phosphate. Its pathway is metabolic intermediate biosynthesis; chorismate biosynthesis; chorismate from D-erythrose 4-phosphate and phosphoenolpyruvate: step 2/7. Catalyzes the second step in the shikimate pathway. This Actinidia chinensis var. chinensis (Chinese soft-hair kiwi) protein is 3-dehydroquinate synthase, chloroplastic (DHQS).